Here is a 175-residue protein sequence, read N- to C-terminus: D-glycero-beta-D-manno-heptose-1,7-bisphosphate 7-phosphatase (175 aa).

The Nucleophile role is filled by Asp7. Asp7 and Asp9 together coordinate Mg(2+). Residues 7-9 (DRD), 15-19 (DSDAY), and 50-53 (TNQS) contribute to the substrate site. The active-site Proton donor is the Asp9. Positions 89, 91, 97, and 99 each coordinate Zn(2+). Residue 100–101 (RK) participates in substrate binding. Asp126 contacts Mg(2+).

The protein belongs to the gmhB family. In terms of assembly, monomer. Mg(2+) serves as cofactor. The cofactor is Zn(2+).

The protein localises to the cytoplasm. The enzyme catalyses D-glycero-beta-D-manno-heptose 1,7-bisphosphate + H2O = D-glycero-beta-D-manno-heptose 1-phosphate + phosphate. Its pathway is nucleotide-sugar biosynthesis; ADP-L-glycero-beta-D-manno-heptose biosynthesis; ADP-L-glycero-beta-D-manno-heptose from D-glycero-beta-D-manno-heptose 7-phosphate: step 2/4. The protein operates within bacterial outer membrane biogenesis; LPS core biosynthesis. Converts the D-glycero-beta-D-manno-heptose 1,7-bisphosphate (beta-HBP) intermediate into D-glycero-beta-D-manno-heptose 1-phosphate by removing the phosphate group at the C-7 position. The protein is D-glycero-beta-D-manno-heptose-1,7-bisphosphate 7-phosphatase of Pseudomonas putida (strain ATCC 47054 / DSM 6125 / CFBP 8728 / NCIMB 11950 / KT2440).